The following is a 214-amino-acid chain: Dynein axonemal assembly factor 6 (214 aa).

Disordered regions lie at residues 1-22 and 34-68; these read MESENMDSENMKTENMESQNVD and ALSKLLNPEEEDDSDYGQTNGLSTIGAMGPGNIGP.

Belongs to the PIH1 family. As to quaternary structure, interacts with HSPA1A/B and HSP90AA1. Interacts with DNAAF2 and DNAAF4. Interacts wuth DNAI2. As to expression, expressed in testis, small intestine, prostate, adrenal gland, spleen, lung, bladder, breast and ovary. Expressed in ciliated epithelial cells.

It is found in the cytoplasm. The protein localises to the golgi apparatus. Its subcellular location is the trans-Golgi network. Its function is as follows. Plays a role in cytoplasmic pre-assembly of axonemal dynein. This Homo sapiens (Human) protein is Dynein axonemal assembly factor 6.